Here is a 544-residue protein sequence, read N- to C-terminus: Phosphoacetylglucosamine mutase (544 aa).

Serine 66 functions as the Phosphoserine intermediate in the catalytic mechanism. Residues serine 66, aspartate 290, aspartate 292, and aspartate 294 each coordinate Mg(2+). Substrate is bound by residues 387–389, 512–516, and arginine 521; these read EAN and RASGT.

This sequence belongs to the phosphohexose mutase family. It depends on Mg(2+) as a cofactor.

It carries out the reaction N-acetyl-alpha-D-glucosamine 1-phosphate = N-acetyl-D-glucosamine 6-phosphate. The protein operates within nucleotide-sugar biosynthesis; UDP-N-acetyl-alpha-D-glucosamine biosynthesis; N-acetyl-alpha-D-glucosamine 1-phosphate from alpha-D-glucosamine 6-phosphate (route I): step 2/2. Catalyzes the conversion of GlcNAc-6-P into GlcNAc-1-P during the synthesis of uridine diphosphate/UDP-GlcNAc, which is a biosynthetic precursor of chitin and also supplies the amino sugars for N-linked oligosaccharides of glycoproteins. This is Phosphoacetylglucosamine mutase from Candida albicans (Yeast).